Reading from the N-terminus, the 326-residue chain is Flavanone 3-dioxygenase 3 (326 aa).

Over residues 1–15 (MSDTSKGIPQEQLPS) the composition is skewed to polar residues. Positions 1-21 (MSDTSKGIPQEQLPSQELHPP) are disordered. One can recognise a Fe2OG dioxygenase domain in the interval 175-276 (EGLQLLSVNC…RISLASIHGF (102 aa)). Fe cation contacts are provided by His200, Asp202, and His257. 2-oxoglutarate is bound at residue Arg267.

It belongs to the iron/ascorbate-dependent oxidoreductase family. Fe(2+) is required as a cofactor. The cofactor is L-ascorbate. In terms of tissue distribution, expressed at very low levels in roots, leaves, stems and seeds.

The enzyme catalyses a (2S)-flavan-4-one + 2-oxoglutarate + O2 = a (2R,3R)-dihydroflavonol + succinate + CO2. Its pathway is secondary metabolite biosynthesis; flavonoid biosynthesis. Its function is as follows. Catalyzes the 3-beta-hydroxylation of 2S-flavanones to 2R,3R-dihydroflavonols which are intermediates in the biosynthesis of flavonols, anthocyanidins, catechins and proanthocyanidins in plants. Converts (2S)-eriodictyol to (+)-taxifolin and (2S)-naringenin to (+)-(2R/3R)-dihydrokaempferol in vitro. The chain is Flavanone 3-dioxygenase 3 from Oryza sativa subsp. japonica (Rice).